The sequence spans 524 residues: uncharacterized protein (524 aa).

The signal sequence occupies residues 1-21; it reads MLLRSVWYKLGSLLIILPLTG. Cysteine 22 carries N-palmitoyl cysteine lipidation. Cysteine 22 carries S-diacylglycerol cysteine lipidation.

Belongs to the MG067/MG068/MG395 family.

It is found in the cell membrane. This is an uncharacterized protein from Mycoplasma pneumoniae (strain ATCC 29342 / M129 / Subtype 1) (Mycoplasmoides pneumoniae).